Reading from the N-terminus, the 311-residue chain is Formimidoylglutamase (311 aa).

Positions 130, 155, 157, 159, 242, and 244 each coordinate Mn(2+).

This sequence belongs to the arginase family. It depends on Mn(2+) as a cofactor.

It catalyses the reaction N-formimidoyl-L-glutamate + H2O = formamide + L-glutamate. The protein operates within amino-acid degradation; L-histidine degradation into L-glutamate; L-glutamate from N-formimidoyl-L-glutamate (hydrolase route): step 1/1. In terms of biological role, catalyzes the conversion of N-formimidoyl-L-glutamate to L-glutamate and formamide. The protein is Formimidoylglutamase of Staphylococcus aureus (strain MRSA252).